The following is a 146-amino-acid chain: Heat-stable 19 kDa antigen (146 aa).

Positions 1-20 (MKFSLLSAIAAAVFVPFTSA) are cleaved as a signal peptide.

Belongs to the cerato-platanin family. In terms of processing, glycosylated.

It is found in the secreted. The protein is Heat-stable 19 kDa antigen (CSA) of Coccidioides immitis (strain RS) (Valley fever fungus).